A 580-amino-acid polypeptide reads, in one-letter code: Laccase-20 (580 aa).

The signal sequence occupies residues 1 to 23 (MVASLLCTVAVAVLAVAAVGGEA). Plastocyanin-like domains lie at 31–147 (VVHE…PRDG) and 156–310 (KDVP…YTSA). 2 N-linked (GlcNAc...) asparagine glycosylation sites follow: N36 and N42. Residues H81 and H83 each coordinate Cu cation. Residue N115 is glycosylated (N-linked (GlcNAc...) asparagine). Cu cation is bound by residues H126 and H128. N200, N339, N392, N429, and N460 each carry an N-linked (GlcNAc...) asparagine glycan. Residues 419-561 (DFPVRPPRPY…ATAFIVEDGP (143 aa)) enclose the Plastocyanin-like 3 domain. 8 residues coordinate Cu cation: N478, H481, H483, H540, C541, H542, H546, and M551. The disordered stretch occupies residues 560–580 (GPTPETSLPPPPPEFKRCDAS).

It belongs to the multicopper oxidase family. Cu cation is required as a cofactor.

It localises to the secreted. The protein resides in the extracellular space. The protein localises to the apoplast. It carries out the reaction 4 hydroquinone + O2 = 4 benzosemiquinone + 2 H2O. Lignin degradation and detoxification of lignin-derived products. The sequence is that of Laccase-20 (LAC20) from Oryza sativa subsp. indica (Rice).